A 67-amino-acid polypeptide reads, in one-letter code: Large ribosomal subunit protein uL29 (67 aa).

It belongs to the universal ribosomal protein uL29 family. Part of the 50S ribosomal subunit. Contacts protein L23 and trigger factor when it is complexed with the ribosome.

Its function is as follows. Binds the 23S rRNA. One of the proteins that surrounds the polypeptide exit tunnel on the outside of the subunit. The chain is Large ribosomal subunit protein uL29 (rpmC) from Deinococcus radiodurans (strain ATCC 13939 / DSM 20539 / JCM 16871 / CCUG 27074 / LMG 4051 / NBRC 15346 / NCIMB 9279 / VKM B-1422 / R1).